Reading from the N-terminus, the 342-residue chain is Succinylglutamate desuccinylase (342 aa).

Positions 63, 66, and 159 each coordinate Zn(2+). Residue glutamate 222 is part of the active site.

It belongs to the AspA/AstE family. Succinylglutamate desuccinylase subfamily. Zn(2+) is required as a cofactor.

It carries out the reaction N-succinyl-L-glutamate + H2O = L-glutamate + succinate. The protein operates within amino-acid degradation; L-arginine degradation via AST pathway; L-glutamate and succinate from L-arginine: step 5/5. Transforms N(2)-succinylglutamate into succinate and glutamate. This is Succinylglutamate desuccinylase from Paraburkholderia xenovorans (strain LB400).